Consider the following 173-residue polypeptide: Putative metal-dependent hydrolase BCE_2729 (173 aa).

Residues H65, H156, and H160 each contribute to the Zn(2+) site.

Belongs to the metal hydrolase YfiT family. In terms of assembly, homodimer. Requires Zn(2+) as cofactor.

It is found in the cytoplasm. Its function is as follows. Possible metal-dependent hydrolase. The sequence is that of Putative metal-dependent hydrolase BCE_2729 from Bacillus cereus (strain ATCC 10987 / NRS 248).